A 212-amino-acid chain; its full sequence is Penicillin-binding protein activator LpoB (212 aa).

A signal peptide spans 1 to 19 (MTKMHRYAAIAALAIFLSG). Cys-20 carries the N-palmitoyl cysteine lipid modification. Cys-20 is lipidated: S-diacylglycerol cysteine. The segment at 28–73 (PVEEVKPAPEQPAQPPQPPVVPSVPTIPQQPGPIEHEDQTGQPAPK) is disordered. A compositionally biased stretch (pro residues) spans 36 to 49 (PEQPAQPPQPPVVP).

Belongs to the LpoB family. Interacts with PBP1b.

It localises to the cell outer membrane. Regulator of peptidoglycan synthesis that is essential for the function of penicillin-binding protein 1B (PBP1b). The chain is Penicillin-binding protein activator LpoB from Salmonella typhimurium (strain LT2 / SGSC1412 / ATCC 700720).